Consider the following 400-residue polypeptide: Cysteine desulfurase (400 aa).

Residues 72–73 (GT), Asn152, Gln180, and 200–202 (SGH) contribute to the pyridoxal 5'-phosphate site. Residue Lys203 is modified to N6-(pyridoxal phosphate)lysine. Pyridoxal 5'-phosphate is bound at residue Thr238. The active-site Cysteine persulfide intermediate is Cys326. Cys326 provides a ligand contact to [2Fe-2S] cluster.

This sequence belongs to the class-V pyridoxal-phosphate-dependent aminotransferase family. NifS/IscS subfamily. Homodimer. It depends on pyridoxal 5'-phosphate as a cofactor.

The catalysed reaction is (sulfur carrier)-H + L-cysteine = (sulfur carrier)-SH + L-alanine. Functionally, catalyzes the removal of elemental sulfur atoms from cysteine to produce alanine. Seems to participate in the biosynthesis of the nitrogenase metalloclusters by providing the inorganic sulfur required for the Fe-S core formation. This chain is Cysteine desulfurase, found in Gluconacetobacter diazotrophicus (strain ATCC 49037 / DSM 5601 / CCUG 37298 / CIP 103539 / LMG 7603 / PAl5).